The primary structure comprises 197 residues: Xanthine phosphoribosyltransferase (197 aa).

Xanthine-binding residues include leucine 20 and threonine 27. Residue 128-132 (ANGQA) participates in 5-phospho-alpha-D-ribose 1-diphosphate binding. Position 156 (lysine 156) interacts with xanthine.

It belongs to the purine/pyrimidine phosphoribosyltransferase family. Xpt subfamily. Homodimer.

Its subcellular location is the cytoplasm. The enzyme catalyses XMP + diphosphate = xanthine + 5-phospho-alpha-D-ribose 1-diphosphate. It functions in the pathway purine metabolism; XMP biosynthesis via salvage pathway; XMP from xanthine: step 1/1. Functionally, converts the preformed base xanthine, a product of nucleic acid breakdown, to xanthosine 5'-monophosphate (XMP), so it can be reused for RNA or DNA synthesis. This chain is Xanthine phosphoribosyltransferase, found in Lactococcus lactis subsp. cremoris (strain MG1363).